The following is a 78-amino-acid chain: Defensin-like protein 287 (78 aa).

The first 24 residues, 1–24, serve as a signal peptide directing secretion; that stretch reads MNNLRVIMSVLLAVLVFTATVSES. 3 cysteine pairs are disulfide-bonded: C39–C59, C45–C64, and C51–C66.

Belongs to the DEFL family.

Its subcellular location is the secreted. The polypeptide is Defensin-like protein 287 (Arabidopsis thaliana (Mouse-ear cress)).